The chain runs to 762 residues: Proline-rich receptor-like protein kinase PERK10 (762 aa).

Residues 1 to 322 form a disordered region; that stretch reads MTTPAQAPRE…PTPVTDNSSS (322 aa). Over 1–328 the chain is Extracellular; it reads MTTPAQAPRE…NSSSSGISIA (328 aa). The segment covering 13–23 has biased composition (low complexity); the sequence is SLSPSLASPPL. Residue Asn-37 is glycosylated (N-linked (GlcNAc...) asparagine). The segment covering 41–57 has biased composition (low complexity); it reads PTREPTNGNPPETTNTP. Composition is skewed to pro residues over residues 60 to 210, 231 to 246, and 254 to 275; these read SSPP…PSTP, PPPP…PPSP, and HPSP…PDPL. Over residues 276 to 305 the composition is skewed to low complexity; it reads PSNSSSPPTLLPPSSVVSPPSPPRKSVSGP. N-linked (GlcNAc...) asparagine glycosylation is found at Asn-278 and Asn-319. The helical transmembrane segment at 329-349 threads the bilayer; the sequence is AVVGVSIGVALVLLTLIGVVV. Over 350–762 the chain is Cytoplasmic; it reads CCLKKRKKRL…NSYISKDENL (413 aa). A disordered region spans residues 370-410; the sequence is TPMESSSPRSDSALLKTQSSAPLVGNRSSNRTYLSQSEPGG. Residues 372–407 are compositionally biased toward polar residues; sequence MESSSPRSDSALLKTQSSAPLVGNRSSNRTYLSQSE. A Protein kinase domain is found at 430-706; the sequence is FSDENLLGEG…SQIVRAFDSL (277 aa). ATP is bound by residues 436-444 and Lys-458; that span reads LGEGGFGRV. Catalysis depends on Asp-554, which acts as the Proton acceptor.

It belongs to the protein kinase superfamily. Ser/Thr protein kinase family. Interacts with KIPK1 and KIPK2 (via its cytosolic domain). In terms of tissue distribution, mostly expressed in inflorescence bolts and flower buds, and, to a lower extent, in roots, seedlings, leaves and siliques.

The protein resides in the cell membrane. The catalysed reaction is L-seryl-[protein] + ATP = O-phospho-L-seryl-[protein] + ADP + H(+). It carries out the reaction L-threonyl-[protein] + ATP = O-phospho-L-threonyl-[protein] + ADP + H(+). Functionally, could be involved in the negative regulation of root growth. In Arabidopsis thaliana (Mouse-ear cress), this protein is Proline-rich receptor-like protein kinase PERK10 (PERK10).